The primary structure comprises 396 residues: NADH-quinone oxidoreductase subunit D (396 aa).

The protein belongs to the complex I 49 kDa subunit family. As to quaternary structure, NDH-1 is composed of 14 different subunits. Subunits NuoB, C, D, E, F, and G constitute the peripheral sector of the complex.

Its subcellular location is the cell inner membrane. The catalysed reaction is a quinone + NADH + 5 H(+)(in) = a quinol + NAD(+) + 4 H(+)(out). Its function is as follows. NDH-1 shuttles electrons from NADH, via FMN and iron-sulfur (Fe-S) centers, to quinones in the respiratory chain. The immediate electron acceptor for the enzyme in this species is believed to be ubiquinone. Couples the redox reaction to proton translocation (for every two electrons transferred, four hydrogen ions are translocated across the cytoplasmic membrane), and thus conserves the redox energy in a proton gradient. The polypeptide is NADH-quinone oxidoreductase subunit D (Brucella melitensis biotype 1 (strain ATCC 23456 / CCUG 17765 / NCTC 10094 / 16M)).